Here is a 20-residue protein sequence, read N- to C-terminus: Pregnancy-associated glycoprotein 57 (20 aa).

It belongs to the peptidase A1 family. In terms of processing, glycosylated.

It is found in the secreted. This is Pregnancy-associated glycoprotein 57 from Ovis aries (Sheep).